Reading from the N-terminus, the 174-residue chain is Tat proofreading chaperone TtrD (174 aa).

Belongs to the TorD/DmsD family. As to quaternary structure, monomer.

It is found in the cytoplasm. Binds specifically to the Tat signal peptide of the TtrA subunit of the tetrathionate reductase. This Archaeoglobus fulgidus (strain ATCC 49558 / DSM 4304 / JCM 9628 / NBRC 100126 / VC-16) protein is Tat proofreading chaperone TtrD (ttrD).